The primary structure comprises 286 residues: Soluble epoxide hydrolase (286 aa).

Positions 26–123 constitute an AB hydrolase-1 domain; it reads YPLVLLHGWP…DLVERLFILD (98 aa). Residue Asp99 is the Nucleophile of the active site. Tyr209 functions as the Proton donor in the catalytic mechanism. The active-site Proton acceptor is His264.

This sequence belongs to the AB hydrolase superfamily. Epoxide hydrolase family. As to quaternary structure, homotetramer.

It is found in the cytoplasm. Its subcellular location is the cell membrane. It catalyses the reaction an epoxide + H2O = an ethanediol. Involved in catabolic degradation of epoxides. Shows highest activity towards C6 and C7 carbocyclic epoxides. Also active towards linear 1,2-epoxyalkanes. This Corynebacterium sp. (strain C12) protein is Soluble epoxide hydrolase.